A 172-amino-acid chain; its full sequence is Ribosome maturation factor RimM (172 aa).

One can recognise a PRC barrel domain in the interval 96-168 (DGEFYYHEII…RVDVEIPEGL (73 aa)).

It belongs to the RimM family. As to quaternary structure, binds ribosomal protein uS19.

The protein resides in the cytoplasm. Its function is as follows. An accessory protein needed during the final step in the assembly of 30S ribosomal subunit, possibly for assembly of the head region. Essential for efficient processing of 16S rRNA. May be needed both before and after RbfA during the maturation of 16S rRNA. It has affinity for free ribosomal 30S subunits but not for 70S ribosomes. The chain is Ribosome maturation factor RimM from Streptococcus sanguinis (strain SK36).